The sequence spans 42 residues: Photosystem I reaction center subunit IX (42 aa).

The helical transmembrane segment at Tyr-7–Ile-27 threads the bilayer.

It belongs to the PsaJ family.

It is found in the plastid. The protein localises to the chloroplast thylakoid membrane. In terms of biological role, may help in the organization of the PsaE and PsaF subunits. This chain is Photosystem I reaction center subunit IX, found in Capsella bursa-pastoris (Shepherd's purse).